Reading from the N-terminus, the 354-residue chain is Soluble interferon alpha/beta receptor OPG204 (354 aa).

Positions 1–22 (MMKMTMKMMVHIYFVSLLLLLF) are cleaved as a signal peptide. 2 consecutive Ig-like C2-type domains span residues 68–150 (IGEP…RSHV) and 158–240 (PEIY…IVVS). 2 disulfides stabilise this stretch: cysteine 76-cysteine 132 and cysteine 175-cysteine 224. Asparagine 120, asparagine 124, asparagine 185, asparagine 272, and asparagine 324 each carry an N-linked (GlcNAc...) asparagine; by host glycan. One can recognise an Ig-like V-type domain in the interval 249 to 348 (PSQDHRFKLI…HNYYFEKTLT (100 aa)). The cysteines at positions 275 and 336 are disulfide-linked.

It belongs to the interleukin-1 receptor family. In terms of assembly, interacts with host IFNA1.

The protein localises to the secreted. In terms of biological role, counteracts the antiviral effects of host IFN-alpha/beta and key IFN-inducible proteins involved in viral RNA degradation suxh as host OAS1. Acts as a soluble IFN-alpha receptor and thus inhibits the interaction between host IFN-alpha and its receptor. This is Soluble interferon alpha/beta receptor OPG204 (OPG204) from Homo sapiens (Human).